The following is a 195-amino-acid chain: Interferon omega-1 (195 aa).

The or 23 in some molecules signal peptide spans 1-21 (MALLFPLLAALVMTSYSPVGS). Intrachain disulfides connect cysteine 24/cysteine 122 and cysteine 52/cysteine 162. The N-linked (GlcNAc...) asparagine glycan is linked to asparagine 101.

It belongs to the alpha/beta interferon family.

It is found in the secreted. The chain is Interferon omega-1 (IFNW1) from Homo sapiens (Human).